The sequence spans 347 residues: Haptoglobin (347 aa).

An N-terminal signal peptide occupies residues 1-18 (MRALGAVITLLLWGQLFA). Residues 31-88 (DSCPKPPEIANGYVEHLVRYQCKNYYRLRTEGDGVYALNSEKQWVNKAVGEQLPECEA) enclose the Sushi domain. 2 disulfide bridges follow: Cys52–Cys86 and Cys90–Cys207. A Peptidase S1 domain is found at 103 to 345 (IIGGSLDAKG…ILDWIQKTIA (243 aa)). Residues Asn148, Asn152, Asn182, Asn230, and Asn256 are each glycosylated (N-linked (GlcNAc...) asparagine). 2 cysteine pairs are disulfide-bonded: Cys250-Cys281 and Cys292-Cys322. An interaction with CD163 region spans residues 259–264 (VPENKI).

The protein belongs to the peptidase S1 family. As to quaternary structure, tetramer of two alpha and two beta chains; disulfide-linked. The hemoglobin/haptoglobin complex is composed of a haptoglobin dimer bound to two hemoglobin alpha-beta dimers. Interacts with CD163. Interacts with ERGIC3. As to expression, expressed by the liver and secreted in plasma.

It localises to the secreted. As a result of hemolysis, hemoglobin is found to accumulate in the kidney and is secreted in the urine. Haptoglobin captures, and combines with free plasma hemoglobin to allow hepatic recycling of heme iron and to prevent kidney damage. Haptoglobin also acts as an antioxidant, has antibacterial activity and plays a role in modulating many aspects of the acute phase response. Hemoglobin/haptoglobin complexes are rapidly cleared by the macrophage CD163 scavenger receptor expressed on the surface of liver Kupfer cells through an endocytic lysosomal degradation pathway. The sequence is that of Haptoglobin (HP) from Oryctolagus cuniculus (Rabbit).